A 400-amino-acid polypeptide reads, in one-letter code: CCA-adding enzyme (400 aa).

2 residues coordinate ATP: Gly28 and Arg31. Positions 28 and 31 each coordinate CTP. Mg(2+) is bound by residues Asp41 and Asp43. ATP-binding residues include Arg112, Asp155, Arg158, Arg161, and Arg164. The CTP site is built by Arg112, Asp155, Arg158, Arg161, and Arg164.

This sequence belongs to the tRNA nucleotidyltransferase/poly(A) polymerase family. Bacterial CCA-adding enzyme type 3 subfamily. In terms of assembly, homodimer. Mg(2+) is required as a cofactor.

The enzyme catalyses a tRNA precursor + 2 CTP + ATP = a tRNA with a 3' CCA end + 3 diphosphate. The catalysed reaction is a tRNA with a 3' CCA end + 2 CTP + ATP = a tRNA with a 3' CCACCA end + 3 diphosphate. Catalyzes the addition and repair of the essential 3'-terminal CCA sequence in tRNAs without using a nucleic acid template. Adds these three nucleotides in the order of C, C, and A to the tRNA nucleotide-73, using CTP and ATP as substrates and producing inorganic pyrophosphate. tRNA 3'-terminal CCA addition is required both for tRNA processing and repair. Also involved in tRNA surveillance by mediating tandem CCA addition to generate a CCACCA at the 3' terminus of unstable tRNAs. While stable tRNAs receive only 3'-terminal CCA, unstable tRNAs are marked with CCACCA and rapidly degraded. In Staphylococcus aureus (strain MSSA476), this protein is CCA-adding enzyme.